The chain runs to 227 residues: ATP-dependent dethiobiotin synthetase BioD (227 aa).

Position 13 to 18 (13 to 18 (NIGKTI)) interacts with ATP. A Mg(2+)-binding site is contributed by Thr17. The active site involves Lys38. Ser42 contributes to the substrate binding site. Residues Asp55, 117-120 (EGFG), 177-178 (NH), 206-208 (PFI), and Asn213 contribute to the ATP site. Residues Asp55 and Glu117 each coordinate Mg(2+).

This sequence belongs to the dethiobiotin synthetase family. Homodimer. Mg(2+) serves as cofactor.

Its subcellular location is the cytoplasm. It carries out the reaction (7R,8S)-7,8-diammoniononanoate + CO2 + ATP = (4R,5S)-dethiobiotin + ADP + phosphate + 3 H(+). It participates in cofactor biosynthesis; biotin biosynthesis; biotin from 7,8-diaminononanoate: step 1/2. Functionally, catalyzes a mechanistically unusual reaction, the ATP-dependent insertion of CO2 between the N7 and N8 nitrogen atoms of 7,8-diaminopelargonic acid (DAPA, also called 7,8-diammoniononanoate) to form a ureido ring. In Wigglesworthia glossinidia brevipalpis, this protein is ATP-dependent dethiobiotin synthetase BioD.